We begin with the raw amino-acid sequence, 159 residues long: Kojic acid related protein 6 (159 aa).

In terms of biological role, negatively regulates mycelium growth and conidial formation and is required for stress tolerance. Plays a role in kojic acid synthesis in coordination with kojA, kojR and kojT where it acts upstream of kojA. This Aspergillus oryzae (strain ATCC 42149 / RIB 40) (Yellow koji mold) protein is Kojic acid related protein 6.